A 155-amino-acid polypeptide reads, in one-letter code: MINEKADSLVNAFKELLSQESFGSQSEIVSALQQMGFTHVNQSKVSRMLTKFGAVRTRNTRMEMVYCLPNELSVPNTGSPLKNLVLDVDHNETLIVIKTSPGAAQLIARLLDSVGKSEGILGTIAGDDTIFVTPTTGNDIQILITNIQKLFESSL.

This sequence belongs to the ArgR family.

It is found in the cytoplasm. It functions in the pathway amino-acid biosynthesis; L-arginine biosynthesis [regulation]. Its function is as follows. Regulates arginine biosynthesis genes. The protein is Arginine repressor of Histophilus somni (strain 2336) (Haemophilus somnus).